The following is a 419-amino-acid chain: Epothilone C/D epoxidase (419 aa).

2 residues coordinate substrate: alanine 180 and glycine 304. Cysteine 365 contributes to the heme binding site.

This sequence belongs to the cytochrome P450 family. Heme is required as a cofactor.

It carries out the reaction epothilone C + 2 reduced [2Fe-2S]-[ferredoxin] + O2 + 2 H(+) = epothilone A + 2 oxidized [2Fe-2S]-[ferredoxin] + H2O. The enzyme catalyses epothilone D + 2 reduced [2Fe-2S]-[ferredoxin] + O2 + 2 H(+) = epothilone B + 2 oxidized [2Fe-2S]-[ferredoxin] + H2O. Its pathway is secondary metabolite biosynthesis; epothilone biosynthesis. Its function is as follows. Involved in the biosynthesis of epothilones, macrolactones which have a narrow anti-fungal spectrum and microtubule-stabilizing activity. Catalyzes the epoxidation of epothilones C and D to epothilones A and B, respectively. This is Epothilone C/D epoxidase (cyp167A1) from Sorangium cellulosum (Polyangium cellulosum).